We begin with the raw amino-acid sequence, 235 residues long: Large ribosomal subunit protein uL1 (235 aa).

This sequence belongs to the universal ribosomal protein uL1 family. Part of the 50S ribosomal subunit.

In terms of biological role, binds directly to 23S rRNA. The L1 stalk is quite mobile in the ribosome, and is involved in E site tRNA release. Protein L1 is also a translational repressor protein, it controls the translation of the L11 operon by binding to its mRNA. The chain is Large ribosomal subunit protein uL1 from Lawsonia intracellularis (strain PHE/MN1-00).